A 501-amino-acid polypeptide reads, in one-letter code: Zinc finger protein 704 (501 aa).

Residues 80–96 (SLKSTCNGGQRDGLTQG) are compositionally biased toward polar residues. 3 disordered regions span residues 80–138 (SLKS…HTRS), 183–203 (PLVRSPPVKVSEGLNGSWKDG), and 216–267 (WSWS…LFDE). The span at 115–137 (EEPRVLEHKRTGRALETEKDHTR) shows a compositional bias: basic and acidic residues. Residues 281–306 (FKCLWKNCGKVLSTAAGIQRHIRTVH) form a C2H2-type zinc finger. 4 disordered regions span residues 340–380 (SLSP…SRSA), 398–419 (PVTIPSTSSTGFTPSSSSFSIS), 427–446 (FTGTSASPTHSRTQGFGEQH), and 453–472 (LSSPPRAAGSLSRKSRGEGK). The span at 368–380 (SESSSSTPLSRSA) shows a compositional bias: low complexity. A CR1 motif is present at residues 472 to 476 (KKCRK). The CR2 motif lies at 490 to 494 (CRWKK).

It is found in the nucleus. Functionally, transcription factor. This Danio rerio (Zebrafish) protein is Zinc finger protein 704 (znf704).